We begin with the raw amino-acid sequence, 264 residues long: Putative hydro-lyase RBAM_004300 (264 aa).

It belongs to the D-glutamate cyclase family.

This is Putative hydro-lyase RBAM_004300 from Bacillus velezensis (strain DSM 23117 / BGSC 10A6 / LMG 26770 / FZB42) (Bacillus amyloliquefaciens subsp. plantarum).